The following is a 322-amino-acid chain: Protein prune homolog 2 (322 aa).

The interval 1 to 110 (MDIHFEEGVL…SIPEYTAEEE (110 aa)) is disordered. A compositionally biased stretch (polar residues) spans 40–52 (PNINLSLDQSEGS). The segment covering 57–80 (DNLDSPDEIDINVDELDTPDEADS) has biased composition (acidic residues). In terms of domain architecture, CRAL-TRIO spans 130–291 (DMKVIEPYRR…SIIKYDEEKS (162 aa)).

It localises to the cytoplasm. Functionally, may play an important role in regulating differentiation, survival and aggressiveness of the tumor cells. In Rattus norvegicus (Rat), this protein is Protein prune homolog 2 (Prune2).